A 125-amino-acid chain; its full sequence is Thioredoxin H-type (125 aa).

Residues 2-112 enclose the Thioredoxin domain; the sequence is AEGNVFACHS…LERKVAALAA (111 aa). Active-site nucleophile residues include cysteine 38 and cysteine 41. An intrachain disulfide couples cysteine 38 to cysteine 41.

The protein belongs to the thioredoxin family. Plant H-type subfamily.

It localises to the cytoplasm. In terms of biological role, participates in various redox reactions through the reversible oxidation of the active center dithiol to a disulfide. The H form is known to activate a number of cytosolic enzymes. The sequence is that of Thioredoxin H-type (SB09) from Picea mariana (Black spruce).